Reading from the N-terminus, the 312-residue chain is Ornithine carbamoyltransferase (312 aa).

Carbamoyl phosphate is bound by residues 57–60 (STRT), Gln84, Arg108, and 135–138 (HPCQ). L-ornithine is bound by residues Asn166, Asp226, and 230–231 (SM). Carbamoyl phosphate is bound by residues 265-266 (CL) and Arg293.

Belongs to the aspartate/ornithine carbamoyltransferase superfamily. OTCase family.

It localises to the cytoplasm. It catalyses the reaction carbamoyl phosphate + L-ornithine = L-citrulline + phosphate + H(+). Its pathway is amino-acid degradation; L-arginine degradation via ADI pathway; carbamoyl phosphate from L-arginine: step 2/2. Reversibly catalyzes the transfer of the carbamoyl group from carbamoyl phosphate (CP) to the N(epsilon) atom of ornithine (ORN) to produce L-citrulline. This Brucella abortus (strain 2308) protein is Ornithine carbamoyltransferase.